The chain runs to 334 residues: N-acetyl-gamma-glutamyl-phosphate reductase (334 aa).

C154 is an active-site residue.

The protein belongs to the NAGSA dehydrogenase family. Type 1 subfamily.

It localises to the cytoplasm. The catalysed reaction is N-acetyl-L-glutamate 5-semialdehyde + phosphate + NADP(+) = N-acetyl-L-glutamyl 5-phosphate + NADPH + H(+). The protein operates within amino-acid biosynthesis; L-arginine biosynthesis; N(2)-acetyl-L-ornithine from L-glutamate: step 3/4. Catalyzes the NADPH-dependent reduction of N-acetyl-5-glutamyl phosphate to yield N-acetyl-L-glutamate 5-semialdehyde. The sequence is that of N-acetyl-gamma-glutamyl-phosphate reductase from Vibrio vulnificus (strain YJ016).